A 297-amino-acid chain; its full sequence is Homoserine kinase (297 aa).

82–92 serves as a coordination point for ATP; that stretch reads PVSRGLGSSAA.

Belongs to the GHMP kinase family. Homoserine kinase subfamily.

It is found in the cytoplasm. The enzyme catalyses L-homoserine + ATP = O-phospho-L-homoserine + ADP + H(+). Its pathway is amino-acid biosynthesis; L-threonine biosynthesis; L-threonine from L-aspartate: step 4/5. Its function is as follows. Catalyzes the ATP-dependent phosphorylation of L-homoserine to L-homoserine phosphate. This chain is Homoserine kinase, found in Clostridium botulinum (strain Langeland / NCTC 10281 / Type F).